The chain runs to 242 residues: N-alpha-acetyltransferase 60 (242 aa).

The Cytoplasmic portion of the chain corresponds to 1 to 192 (MTEVVPSSAL…GGHPPWTILD (192 aa)). The N-acetyltransferase domain occupies 13 to 182 (VSLRLLCHDD…DGFTYVLYIN (170 aa)). Tyr38 is a substrate binding site. N6-acetyllysine; by autocatalysis is present on Lys79. Tyr97 is a catalytic residue. Leu99 serves as a coordination point for substrate. 101–103 (LGV) is an acetyl-CoA binding site. 3 positions are modified to N6-acetyllysine; by autocatalysis: Lys105, Lys109, and Lys121. 109 to 114 (KHGIGS) contacts acetyl-CoA. His138 is a catalytic residue. Acetyl-CoA-binding positions include Asn143 and 150–153 (YENR). The required for homodimerization stretch occupies residues 162 to 173 (PYYYSIRGVLKD). Residue Tyr165 coordinates substrate. The helical intramembrane region spans 193–236 (YIQHLGSALANLSPCSIPHRIYRQAHSLLCSFLPWSSISSKGGI). The Cytoplasmic segment spans residues 237 to 242 (EYSRTM).

The protein belongs to the acetyltransferase family. NAA60 subfamily. Monomer and homodimer; monomer in presence of substrate and homodimer in its absence. Post-translationally, acetylated: autoacetylation is required for optimal acetyltransferase activity.

The protein resides in the golgi apparatus membrane. It catalyses the reaction N-terminal L-methionyl-[transmembrane protein] + acetyl-CoA = N-terminal N(alpha)-acetyl-L-methionyl-[transmembrane protein] + CoA + H(+). The catalysed reaction is L-lysyl-[protein] + acetyl-CoA = N(6)-acetyl-L-lysyl-[protein] + CoA + H(+). Its function is as follows. N-alpha-acetyltransferase that specifically mediates the acetylation of N-terminal residues of the transmembrane proteins, with a strong preference for N-termini facing the cytosol. Displays N-terminal acetyltransferase activity towards a range of N-terminal sequences including those starting with Met-Lys, Met-Val, Met-Ala and Met-Met. Required for normal chromosomal segregation during anaphase. May also show histone acetyltransferase activity; such results are however unclear in vivo and would require additional experimental evidences. This is N-alpha-acetyltransferase 60 (Naa60) from Rattus norvegicus (Rat).